A 21-amino-acid polypeptide reads, in one-letter code: Nucleoside diphosphate kinase (21 aa).

Histidine 4 functions as the Pros-phosphohistidine intermediate in the catalytic mechanism.

Belongs to the NDK family. In terms of assembly, homohexamer. Requires Mg(2+) as cofactor.

Its subcellular location is the cytoplasm. The enzyme catalyses a 2'-deoxyribonucleoside 5'-diphosphate + ATP = a 2'-deoxyribonucleoside 5'-triphosphate + ADP. It carries out the reaction a ribonucleoside 5'-diphosphate + ATP = a ribonucleoside 5'-triphosphate + ADP. Major role in the synthesis of nucleoside triphosphates other than ATP. The ATP gamma phosphate is transferred to the NDP beta phosphate via a ping-pong mechanism, using a phosphorylated active-site intermediate. This Candida albicans (Yeast) protein is Nucleoside diphosphate kinase (NDK1).